Here is a 153-residue protein sequence, read N- to C-terminus: UPF0179 protein AF_2154 (153 aa).

It belongs to the UPF0179 family.

This Archaeoglobus fulgidus (strain ATCC 49558 / DSM 4304 / JCM 9628 / NBRC 100126 / VC-16) protein is UPF0179 protein AF_2154.